A 201-amino-acid chain; its full sequence is Oxalate oxidase 1 (201 aa).

A disulfide bridge links Cys10 with Cys26. The region spanning Ser40–Glu191 is the Cupin type-1 domain. An N-linked (GlcNAc...) asparagine glycan is attached at Asn47. Oxalate-binding residues include Asn75 and Asn85. Positions 88, 90, 95, and 137 each coordinate Mn(2+). His90 and Glu95 together coordinate oxalate.

It belongs to the germin family. As to quaternary structure, homo hexamer; a trimer of dimers. In terms of processing, glycosylated. A form called G contains antennary GlcNAc residues, whereas a form called G' lacks antennary GlcNAc residues in its otherwise identical glycans.

It is found in the secreted. Its subcellular location is the extracellular space. The protein resides in the apoplast. The protein localises to the cell wall. It carries out the reaction oxalate + O2 + 2 H(+) = H2O2 + 2 CO2. Its function is as follows. Releases hydrogen peroxide in the apoplast which may be important for cross-linking reactions in the cell wall biochemistry. May play an important role in several aspects of plant growth and defense mechanisms. This chain is Oxalate oxidase 1, found in Hordeum vulgare (Barley).